A 160-amino-acid chain; its full sequence is SsrA-binding protein (160 aa).

This sequence belongs to the SmpB family.

Its subcellular location is the cytoplasm. Its function is as follows. Required for rescue of stalled ribosomes mediated by trans-translation. Binds to transfer-messenger RNA (tmRNA), required for stable association of tmRNA with ribosomes. tmRNA and SmpB together mimic tRNA shape, replacing the anticodon stem-loop with SmpB. tmRNA is encoded by the ssrA gene; the 2 termini fold to resemble tRNA(Ala) and it encodes a 'tag peptide', a short internal open reading frame. During trans-translation Ala-aminoacylated tmRNA acts like a tRNA, entering the A-site of stalled ribosomes, displacing the stalled mRNA. The ribosome then switches to translate the ORF on the tmRNA; the nascent peptide is terminated with the 'tag peptide' encoded by the tmRNA and targeted for degradation. The ribosome is freed to recommence translation, which seems to be the essential function of trans-translation. The protein is SsrA-binding protein of Erwinia tasmaniensis (strain DSM 17950 / CFBP 7177 / CIP 109463 / NCPPB 4357 / Et1/99).